Reading from the N-terminus, the 599-residue chain is Dachshund homolog 2 (599 aa).

A DACHbox-N region spans residues 69–155 (RMVDMHGMKV…LITRKDFETL (87 aa)). Disordered regions lie at residues 166–186 (RQMTRKQAVNSSRPGRPPKRS), 237–280 (LQGN…GPQH), and 370–409 (RIPESPSPAPSLEENHRPGSQTSSHTSSSVSSSPSQMDHH). A compositionally biased stretch (polar residues) spans 237-262 (LQGNGSQNGTESEPDDLNSNTGGSES). The span at 389–405 (SQTSSHTSSSVSSSPSQ) shows a compositional bias: low complexity. The DACHbox-C stretch occupies residues 453–533 (SSVETLLTNI…KTKRKLQEAL (81 aa)). Residues 459 to 554 (LTNIQGLLKV…QALKQATTSD (96 aa)) adopt a coiled-coil conformation.

The protein belongs to the DACH/dachshund family. Interacts with SIX6 and EYA2.

It is found in the nucleus. Its function is as follows. Transcription factor that is involved in regulation of organogenesis. Seems to be a regulator for SIX1 and SIX6. Seems to act as a corepressor of SIX6 in regulating proliferation by directly repressing cyclin-dependent kinase inhibitors, including the p27Kip1 promoter. Is recruited with SIX6 to the p27Kip1 promoter in embryonal retina. SIX6 corepression also seems to involve NCOR1, TBL1, HDAC1 and HDAC3. May be involved together with PAX3, SIX1, and EYA2 in regulation of myogenesis. In the developing somite, expression of DACH2 and PAX3 is regulated by the overlying ectoderm, and DACH2 and PAX3 positively regulate each other's expression. Probably binds to DNA via its DACHbox-N domain. This chain is Dachshund homolog 2 (DACH2), found in Homo sapiens (Human).